We begin with the raw amino-acid sequence, 60 residues long: Conotoxin Cl1.1 (60 aa).

A signal peptide spans 1-19; sequence MRCLPVIVILLLLISSAAA. A propeptide spanning residues 20 to 48 is cleaved from the precursor; sequence VVEGPLRVNRRLRPRKAPVDMQARDWNWG.

The protein belongs to the conotoxin T superfamily. Post-translationally, contains 2 disulfide bonds. Expressed by the venom duct.

The protein resides in the secreted. This chain is Conotoxin Cl1.1, found in Californiconus californicus (California cone).